The following is a 158-amino-acid chain: Transcription elongation factor GreA (158 aa).

Belongs to the GreA/GreB family.

Functionally, necessary for efficient RNA polymerase transcription elongation past template-encoded arresting sites. The arresting sites in DNA have the property of trapping a certain fraction of elongating RNA polymerases that pass through, resulting in locked ternary complexes. Cleavage of the nascent transcript by cleavage factors such as GreA or GreB allows the resumption of elongation from the new 3'terminus. GreA releases sequences of 2 to 3 nucleotides. In Acinetobacter baumannii (strain SDF), this protein is Transcription elongation factor GreA.